The primary structure comprises 202 residues: Small ribosomal subunit protein uS4 (202 aa).

The disordered stretch occupies residues 22–48 (TGKELARRPYAPGDHGQGRRGKLSEYG). In terms of domain architecture, S4 RNA-binding spans 93-154 (RRLDNMVYRL…KSKKLAVITG (62 aa)).

This sequence belongs to the universal ribosomal protein uS4 family. As to quaternary structure, part of the 30S ribosomal subunit. Contacts protein S5. The interaction surface between S4 and S5 is involved in control of translational fidelity.

Functionally, one of the primary rRNA binding proteins, it binds directly to 16S rRNA where it nucleates assembly of the body of the 30S subunit. In terms of biological role, with S5 and S12 plays an important role in translational accuracy. This Lactiplantibacillus plantarum (strain ATCC BAA-793 / NCIMB 8826 / WCFS1) (Lactobacillus plantarum) protein is Small ribosomal subunit protein uS4.